The chain runs to 275 residues: NH(3)-dependent NAD(+) synthetase (275 aa).

46-53 (GISGGQDS) contributes to the ATP binding site. Residue Asp-52 participates in Mg(2+) binding. Deamido-NAD(+) is bound at residue Arg-140. An ATP-binding site is contributed by Thr-160. Position 165 (Glu-165) interacts with Mg(2+). Positions 173 and 180 each coordinate deamido-NAD(+). 2 residues coordinate ATP: Lys-189 and Thr-211. Deamido-NAD(+) is bound at residue 260-261 (HK).

Belongs to the NAD synthetase family. In terms of assembly, homodimer.

The enzyme catalyses deamido-NAD(+) + NH4(+) + ATP = AMP + diphosphate + NAD(+) + H(+). It functions in the pathway cofactor biosynthesis; NAD(+) biosynthesis; NAD(+) from deamido-NAD(+) (ammonia route): step 1/1. In terms of biological role, catalyzes the ATP-dependent amidation of deamido-NAD to form NAD. Uses ammonia as a nitrogen source. This Shigella boydii serotype 4 (strain Sb227) protein is NH(3)-dependent NAD(+) synthetase.